The following is a 277-amino-acid chain: Phosphatidylglycerol--prolipoprotein diacylglyceryl transferase (277 aa).

A run of 7 helical transmembrane segments spans residues L21–A41, L60–Y80, V95–W115, F124–L144, S176–I196, G203–V223, and M239–F259. Position 143 (R143) interacts with a 1,2-diacyl-sn-glycero-3-phospho-(1'-sn-glycerol).

Belongs to the Lgt family.

It is found in the cell inner membrane. It carries out the reaction L-cysteinyl-[prolipoprotein] + a 1,2-diacyl-sn-glycero-3-phospho-(1'-sn-glycerol) = an S-1,2-diacyl-sn-glyceryl-L-cysteinyl-[prolipoprotein] + sn-glycerol 1-phosphate + H(+). It functions in the pathway protein modification; lipoprotein biosynthesis (diacylglyceryl transfer). Its function is as follows. Catalyzes the transfer of the diacylglyceryl group from phosphatidylglycerol to the sulfhydryl group of the N-terminal cysteine of a prolipoprotein, the first step in the formation of mature lipoproteins. The protein is Phosphatidylglycerol--prolipoprotein diacylglyceryl transferase of Aliivibrio fischeri (strain ATCC 700601 / ES114) (Vibrio fischeri).